The sequence spans 294 residues: ATP synthase gamma chain (294 aa).

This sequence belongs to the ATPase gamma chain family. In terms of assembly, F-type ATPases have 2 components, CF(1) - the catalytic core - and CF(0) - the membrane proton channel. CF(1) has five subunits: alpha(3), beta(3), gamma(1), delta(1), epsilon(1). CF(0) has three main subunits: a, b and c.

The protein localises to the cell inner membrane. Its function is as follows. Produces ATP from ADP in the presence of a proton gradient across the membrane. The gamma chain is believed to be important in regulating ATPase activity and the flow of protons through the CF(0) complex. In Parvibaculum lavamentivorans (strain DS-1 / DSM 13023 / NCIMB 13966), this protein is ATP synthase gamma chain.